A 513-amino-acid chain; its full sequence is uncharacterized protein (513 aa).

The CYTH domain occupies 11-219; sequence HLEVERKFDV…SKLARVLGAT (209 aa). Residues 228–506 form the CHAD domain; sequence PQPPADPVHR…LEAALRKLDK (279 aa).

This is an uncharacterized protein from Mycobacterium tuberculosis (strain ATCC 25618 / H37Rv).